A 71-amino-acid chain; its full sequence is Large ribosomal subunit protein uL30 (71 aa).

This sequence belongs to the universal ribosomal protein uL30 family. As to quaternary structure, part of the 50S ribosomal subunit.

This chain is Large ribosomal subunit protein uL30, found in Mycobacterium leprae (strain TN).